We begin with the raw amino-acid sequence, 194 residues long: MAPLVLYLLTLLMAGHTSASWCVCKTGLSDSVLQKTLDYACGNGADCNPTHPKGSCFNPDNVRAHCNYAVNSFFQKKGQASESCNFTGTATLTTTDPSYTGCAFPSSASGSSGSGSTTVTPGKNSPKGSNSITTFPGGNSPYSGTPSTGLLGGNITDATGTGLNPDYSTESSGFALYYSNNLLLTGFCSLVMML.

The signal sequence occupies residues Met1–His16. A disulfide bond links Cys22 and Cys84. N-linked (GlcNAc...) asparagine glycosylation occurs at Asn85. Positions Ser106–Ser116 are enriched in low complexity. The tract at residues Ser106–Ser140 is disordered. Over residues Thr117–Ser140 the composition is skewed to polar residues. The N-linked (GlcNAc...) asparagine glycan is linked to Asn154. The GPI-anchor amidated serine moiety is linked to residue Ser171. Positions Ser172–Leu194 are cleaved as a propeptide — removed in mature form.

Post-translationally, contains two additional disulfide bonds. As to expression, expressed in the shoot apical region and in young leaves but also detected in the laminar and vasculature of mature leaves.

It localises to the cell membrane. Its subcellular location is the cell junction. The protein localises to the plasmodesma. Able to bind (1-&gt;3)-beta-D-glucans (laminarin). This Arabidopsis thaliana (Mouse-ear cress) protein is PLASMODESMATA CALLOSE-BINDING PROTEIN 2 (PDCB2).